The primary structure comprises 481 residues: OTU domain-containing protein 1 (481 aa).

Disordered regions lie at residues 18–60 (PTAA…AAAE) and 202–282 (LAAA…IVSR). Over residues 38–58 (PPGAAGAAPEPETGECQPAAA) the composition is skewed to low complexity. Basic and acidic residues predominate over residues 225–257 (GEEHLAERGPRGWERGGDRCDAPGGDAARRPDP). Residues 261-281 (APPAGSIEAAPSSAAEPVIVS) show a composition bias toward low complexity. Positions 309-438 (KYRFHIIPDG…NGHYDAVFDH (130 aa)) constitute an OTU domain. A cys-loop region spans residues 314–320 (IIPDGNC). The active site involves D317. C320 acts as the Nucleophile in catalysis. Residues 369–379 (AAQDGAWAGYP) are his-loop. The interval 426–431 (WLSNGH) is variable-loop. H431 is a catalytic residue. Residues 457 to 476 (KRDEELAKSMAISLSKMYIE) enclose the UIM domain.

The enzyme catalyses Thiol-dependent hydrolysis of ester, thioester, amide, peptide and isopeptide bonds formed by the C-terminal Gly of ubiquitin (a 76-residue protein attached to proteins as an intracellular targeting signal).. In terms of biological role, deubiquitinating enzyme that specifically hydrolyzes 'Lys-63'-linked polyubiquitin to monoubiquitin. Required for the stability and translation of a subset mRNAs with a high abundance of rare codons by mediating deubiquitination of 40S ribosomal protein RPS10/eS10, thereby antagonizing ZNF598-mediated 40S ubiquitination. The abundance of rare codons in mRNAs can limit the translation rate and can lead to ribosome collisions that trigger activation of ribosome quality control (RQC) pathway by ZNF598. OTUD1-mediated deubiquitination prevents activation of the RQC and subsequent dissociation of ribosomes and stimulates formation of polysomes and translation. This chain is OTU domain-containing protein 1, found in Homo sapiens (Human).